The sequence spans 499 residues: Aspartyl/glutamyl-tRNA(Asn/Gln) amidotransferase subunit B (499 aa).

It belongs to the GatB/GatE family. GatB subfamily. Heterotrimer of A, B and C subunits.

It carries out the reaction L-glutamyl-tRNA(Gln) + L-glutamine + ATP + H2O = L-glutaminyl-tRNA(Gln) + L-glutamate + ADP + phosphate + H(+). The catalysed reaction is L-aspartyl-tRNA(Asn) + L-glutamine + ATP + H2O = L-asparaginyl-tRNA(Asn) + L-glutamate + ADP + phosphate + 2 H(+). Functionally, allows the formation of correctly charged Asn-tRNA(Asn) or Gln-tRNA(Gln) through the transamidation of misacylated Asp-tRNA(Asn) or Glu-tRNA(Gln) in organisms which lack either or both of asparaginyl-tRNA or glutaminyl-tRNA synthetases. The reaction takes place in the presence of glutamine and ATP through an activated phospho-Asp-tRNA(Asn) or phospho-Glu-tRNA(Gln). The sequence is that of Aspartyl/glutamyl-tRNA(Asn/Gln) amidotransferase subunit B from Bifidobacterium animalis subsp. lactis (strain AD011).